We begin with the raw amino-acid sequence, 318 residues long: MANEMEFEKPILELKSKIADLKEYNETSDVDLTNEIEKLEKRLAKLEASVYSNMTAWDKFQVARHPERPTTLDYISLLFEDFMELHGDRAFGDDAAIVGGVATFNGIPVTVIGHQRGKDTKDNLHRNFGMPHPEGFRKALRLMKQADKFGRPIICFIDTKGAYPGRAAEERGQSEAIARNLYEMSDMKVPIISIVIGEGGSGGALALGVGNQIFMLENAVFSVISPEGAAAILWKDAGQAKKAAESMRITADDLFELGITDGIIPEVKGGAHRDLTAQAAEINKTITKSLHALMAFSEEQLMNQRYEKFKKIGVYEIL.

The 255-residue stretch at 38–292 (KLEKRLAKLE…NKTITKSLHA (255 aa)) folds into the CoA carboxyltransferase C-terminal domain.

This sequence belongs to the AccA family. As to quaternary structure, acetyl-CoA carboxylase is a heterohexamer composed of biotin carboxyl carrier protein (AccB), biotin carboxylase (AccC) and two subunits each of ACCase subunit alpha (AccA) and ACCase subunit beta (AccD).

It is found in the cytoplasm. It catalyses the reaction N(6)-carboxybiotinyl-L-lysyl-[protein] + acetyl-CoA = N(6)-biotinyl-L-lysyl-[protein] + malonyl-CoA. Its pathway is lipid metabolism; malonyl-CoA biosynthesis; malonyl-CoA from acetyl-CoA: step 1/1. Component of the acetyl coenzyme A carboxylase (ACC) complex. First, biotin carboxylase catalyzes the carboxylation of biotin on its carrier protein (BCCP) and then the CO(2) group is transferred by the carboxyltransferase to acetyl-CoA to form malonyl-CoA. In Listeria welshimeri serovar 6b (strain ATCC 35897 / DSM 20650 / CCUG 15529 / CIP 8149 / NCTC 11857 / SLCC 5334 / V8), this protein is Acetyl-coenzyme A carboxylase carboxyl transferase subunit alpha.